The sequence spans 1390 residues: DNA-directed RNA polymerase subunit beta (1390 aa).

Residues 556 to 576 (KLADQDAENDPDSDLGTKSSN) form a disordered region.

It belongs to the RNA polymerase beta chain family. The RNAP catalytic core consists of 2 alpha, 1 beta, 1 beta' and 1 omega subunit. When a sigma factor is associated with the core the holoenzyme is formed, which can initiate transcription.

The enzyme catalyses RNA(n) + a ribonucleoside 5'-triphosphate = RNA(n+1) + diphosphate. Its function is as follows. DNA-dependent RNA polymerase catalyzes the transcription of DNA into RNA using the four ribonucleoside triphosphates as substrates. This Mycoplasmoides gallisepticum (strain R(low / passage 15 / clone 2)) (Mycoplasma gallisepticum) protein is DNA-directed RNA polymerase subunit beta.